We begin with the raw amino-acid sequence, 427 residues long: Enolase (427 aa).

Residue Gln-163 participates in (2R)-2-phosphoglycerate binding. The active-site Proton donor is Glu-205. 3 residues coordinate Mg(2+): Asp-242, Glu-283, and Asp-310. (2R)-2-phosphoglycerate contacts are provided by Lys-335, Arg-364, Ser-365, and Lys-386. Lys-335 (proton acceptor) is an active-site residue.

Belongs to the enolase family. It depends on Mg(2+) as a cofactor.

It is found in the cytoplasm. The protein localises to the secreted. It localises to the cell surface. The enzyme catalyses (2R)-2-phosphoglycerate = phosphoenolpyruvate + H2O. Its pathway is carbohydrate degradation; glycolysis; pyruvate from D-glyceraldehyde 3-phosphate: step 4/5. Functionally, catalyzes the reversible conversion of 2-phosphoglycerate (2-PG) into phosphoenolpyruvate (PEP). It is essential for the degradation of carbohydrates via glycolysis. This chain is Enolase, found in Salinispora tropica (strain ATCC BAA-916 / DSM 44818 / JCM 13857 / NBRC 105044 / CNB-440).